Here is a 168-residue protein sequence, read N- to C-terminus: Putative postmeiotic segregation increased 2-like protein 3 (168 aa).

The KRAB domain maps to 8–84 (VSFKDVAVDF…EGEFPCQHSP (77 aa)).

It belongs to the DNA mismatch repair MutL/HexB family.

The sequence is that of Putative postmeiotic segregation increased 2-like protein 3 (PMS2P3) from Homo sapiens (Human).